The primary structure comprises 119 residues: Large ribosomal subunit protein bL20 (119 aa).

It belongs to the bacterial ribosomal protein bL20 family.

Binds directly to 23S ribosomal RNA and is necessary for the in vitro assembly process of the 50S ribosomal subunit. It is not involved in the protein synthesizing functions of that subunit. This is Large ribosomal subunit protein bL20 from Saccharophagus degradans (strain 2-40 / ATCC 43961 / DSM 17024).